A 234-amino-acid polypeptide reads, in one-letter code: 2,3,4,5-tetrahydropyridine-2,6-dicarboxylate N-acetyltransferase (234 aa).

It belongs to the transferase hexapeptide repeat family. DapH subfamily.

The enzyme catalyses (S)-2,3,4,5-tetrahydrodipicolinate + acetyl-CoA + H2O = L-2-acetamido-6-oxoheptanedioate + CoA. It functions in the pathway amino-acid biosynthesis; L-lysine biosynthesis via DAP pathway; LL-2,6-diaminopimelate from (S)-tetrahydrodipicolinate (acetylase route): step 1/3. In terms of biological role, catalyzes the transfer of an acetyl group from acetyl-CoA to tetrahydrodipicolinate. This is 2,3,4,5-tetrahydropyridine-2,6-dicarboxylate N-acetyltransferase from Lacticaseibacillus paracasei (strain ATCC 334 / BCRC 17002 / CCUG 31169 / CIP 107868 / KCTC 3260 / NRRL B-441) (Lactobacillus paracasei).